The following is a 163-amino-acid chain: SsrA-binding protein (163 aa).

It belongs to the SmpB family.

The protein localises to the cytoplasm. In terms of biological role, required for rescue of stalled ribosomes mediated by trans-translation. Binds to transfer-messenger RNA (tmRNA), required for stable association of tmRNA with ribosomes. tmRNA and SmpB together mimic tRNA shape, replacing the anticodon stem-loop with SmpB. tmRNA is encoded by the ssrA gene; the 2 termini fold to resemble tRNA(Ala) and it encodes a 'tag peptide', a short internal open reading frame. During trans-translation Ala-aminoacylated tmRNA acts like a tRNA, entering the A-site of stalled ribosomes, displacing the stalled mRNA. The ribosome then switches to translate the ORF on the tmRNA; the nascent peptide is terminated with the 'tag peptide' encoded by the tmRNA and targeted for degradation. The ribosome is freed to recommence translation, which seems to be the essential function of trans-translation. This is SsrA-binding protein from Buchnera aphidicola subsp. Schizaphis graminum (strain Sg).